A 1178-amino-acid polypeptide reads, in one-letter code: Topoisomerase 1-associated factor 1 (1178 aa).

Disordered regions lie at residues 576-596 (KQDDQAIDVEDEEHASEDEEL), 792-811 (SWESREQQPGEPTAPNPMIP), 896-965 (DARG…VLEE), and 980-1178 (KIKS…SDSE). The segment covering 580 to 596 (QAIDVEDEEHASEDEEL) has biased composition (acidic residues). Residues 896 to 905 (DARGGGRDEQ) are compositionally biased toward basic and acidic residues. Over residues 911 to 921 (FGSDSEGEDNV) the composition is skewed to acidic residues. Composition is skewed to basic and acidic residues over residues 981–991 (IKSDLYIHASD), 1001–1015 (EFFRLEEQRRKEQAA), and 1025–1034 (VVEEISDKSS). The segment covering 1079-1092 (EAQSPDSPGLGSSS) has biased composition (polar residues). Residues 1105–1116 (SDEDELEFDDDL) are compositionally biased toward acidic residues. Basic and acidic residues predominate over residues 1117–1128 (AFSRDRNRRKDF). Over residues 1138–1147 (EPAQQDADPA) the composition is skewed to low complexity. A compositionally biased stretch (acidic residues) spans 1148–1157 (APDEDDDEDA).

The protein belongs to the timeless family. As to quaternary structure, component of the fork protection complex (FPC) consisting of tof1 and csm3.

It localises to the nucleus. Its function is as follows. Forms a fork protection complex (FPC) with csm3 and which is required for chromosome segregation during meiosis and DNA damage repair. FPC coordinates leading and lagging strand synthesis and moves with the replication fork. FPC stabilizes replication forks in a configuration that is recognized by replication checkpoint sensors. The protein is Topoisomerase 1-associated factor 1 (tof1) of Aspergillus clavatus (strain ATCC 1007 / CBS 513.65 / DSM 816 / NCTC 3887 / NRRL 1 / QM 1276 / 107).